Here is a 120-residue protein sequence, read N- to C-terminus: Large ribosomal subunit protein bL17 (120 aa).

This sequence belongs to the bacterial ribosomal protein bL17 family. In terms of assembly, part of the 50S ribosomal subunit. Contacts protein L32.

The protein is Large ribosomal subunit protein bL17 of Mesomycoplasma hyopneumoniae (strain 232) (Mycoplasma hyopneumoniae).